We begin with the raw amino-acid sequence, 408 residues long: MAEAAAAPALLTSAASAGKAPLPAFPENPPVGVWTRHVTCRYFIHGVCKEGINCRYSHDLATSRSAMICRYFQRGCCAYGDRCRYEHNKPLQEDPTGDTCTAPSESLPEPSGNINSKAAELAASELASGGPRAQDWVNAVEFVPGQLYSGRAPEAYTQGTVKPDEGREEPADPELKKQLCPYAAMGECRYGENCVYLHGDPCDMCGLQVLHPVDTCQRSQHIKSCIEAHEKDMELSFAVQRSKDIVCGICMEVVYEKTNPSERRFGILSNCSHSYCLKCIRKWRSAKQFESKIIKSCPECRITSNFIIPSEYWVEEKEEKHKLIHKYKEAMSSKSCRYFDEGRGTCPFGGNCFYRHAYPDGRIEEPQPRQKSGMSSRYRIPSPSAGIDFGSLTSERAETRLRTRKTKL.

2 C3H1-type zinc fingers span residues W34–A61 and S63–P90. Disordered regions lie at residues P90 to I114 and E154 to P173. Over residues K162 to P173 the composition is skewed to basic and acidic residues. The C3H1-type 3 zinc finger occupies E174–P201. The makorin-type Cys-His stretch occupies residues C202 to H229. An RING-type zinc finger spans residues C247–R301. The segment at A330 to P359 adopts a C3H1-type 4 zinc-finger fold. Positions I363 to L408 are disordered.

The enzyme catalyses S-ubiquitinyl-[E2 ubiquitin-conjugating enzyme]-L-cysteine + [acceptor protein]-L-lysine = [E2 ubiquitin-conjugating enzyme]-L-cysteine + N(6)-ubiquitinyl-[acceptor protein]-L-lysine.. The protein operates within protein modification; protein ubiquitination. Functionally, E3 ubiquitin ligase catalyzing the covalent attachment of ubiquitin moieties onto substrate proteins. This chain is Probable E3 ubiquitin-protein ligase makorin-1 (mkrn1), found in Xenopus laevis (African clawed frog).